Here is a 121-residue protein sequence, read N- to C-terminus: Small ribosomal subunit protein uS13 (121 aa).

Residues 95–121 (LPVRGQNTKNNARTRKGKAVAIAGKKK) are disordered. The segment covering 106-121 (ARTRKGKAVAIAGKKK) has biased composition (basic residues).

This sequence belongs to the universal ribosomal protein uS13 family. Part of the 30S ribosomal subunit. Forms a loose heterodimer with protein S19. Forms two bridges to the 50S subunit in the 70S ribosome.

Its function is as follows. Located at the top of the head of the 30S subunit, it contacts several helices of the 16S rRNA. In the 70S ribosome it contacts the 23S rRNA (bridge B1a) and protein L5 of the 50S subunit (bridge B1b), connecting the 2 subunits; these bridges are implicated in subunit movement. Contacts the tRNAs in the A and P-sites. The sequence is that of Small ribosomal subunit protein uS13 from Streptococcus thermophilus (strain CNRZ 1066).